We begin with the raw amino-acid sequence, 305 residues long: Glycine--tRNA ligase alpha subunit (305 aa).

This sequence belongs to the class-II aminoacyl-tRNA synthetase family. As to quaternary structure, tetramer of two alpha and two beta subunits.

It localises to the cytoplasm. It catalyses the reaction tRNA(Gly) + glycine + ATP = glycyl-tRNA(Gly) + AMP + diphosphate. This Streptococcus pneumoniae serotype 4 (strain ATCC BAA-334 / TIGR4) protein is Glycine--tRNA ligase alpha subunit.